The chain runs to 209 residues: Ribonuclease HII (209 aa).

An RNase H type-2 domain is found at 5-202; the sequence is SMTLGIDEAG…KNRILNPKLL (198 aa). The a divalent metal cation site is built by D11, E12, and D108.

It belongs to the RNase HII family. Requires Mn(2+) as cofactor. It depends on Mg(2+) as a cofactor.

The protein resides in the cytoplasm. The catalysed reaction is Endonucleolytic cleavage to 5'-phosphomonoester.. In terms of biological role, endonuclease that specifically degrades the RNA of RNA-DNA hybrids. This is Ribonuclease HII (rnhB) from Helicobacter pylori (strain J99 / ATCC 700824) (Campylobacter pylori J99).